We begin with the raw amino-acid sequence, 607 residues long: UvrABC system protein C (607 aa).

Residues 16–94 (GRPGVYRMFD…IKEWRPPYNI (79 aa)) enclose the GIY-YIG domain. Positions 203–238 (NALTDELSTAMEAAASTLDFEKAAELRDQISLLRRV) constitute a UVR domain.

The protein belongs to the UvrC family. As to quaternary structure, interacts with UvrB in an incision complex.

The protein resides in the cytoplasm. In terms of biological role, the UvrABC repair system catalyzes the recognition and processing of DNA lesions. UvrC both incises the 5' and 3' sides of the lesion. The N-terminal half is responsible for the 3' incision and the C-terminal half is responsible for the 5' incision. The polypeptide is UvrABC system protein C (Pseudomonas fluorescens (strain ATCC BAA-477 / NRRL B-23932 / Pf-5)).